Consider the following 317-residue polypeptide: L-lactate dehydrogenase (317 aa).

Residues V16, D37, and Y68 each contribute to the NAD(+) site. Substrate-binding positions include Q85, R91, 123-126, and 151-154; these read NPCD and DSAR. 121 to 123 lines the NAD(+) pocket; that stretch reads ASN. H178 serves as the catalytic Proton acceptor. Position 222 is a phosphotyrosine (Y222). T231 contacts substrate.

It belongs to the LDH/MDH superfamily. LDH family. As to quaternary structure, homotetramer.

Its subcellular location is the cytoplasm. The enzyme catalyses (S)-lactate + NAD(+) = pyruvate + NADH + H(+). The protein operates within fermentation; pyruvate fermentation to lactate; (S)-lactate from pyruvate: step 1/1. Functionally, catalyzes the conversion of lactate to pyruvate. The polypeptide is L-lactate dehydrogenase (Mesoplasma florum (strain ATCC 33453 / NBRC 100688 / NCTC 11704 / L1) (Acholeplasma florum)).